A 397-amino-acid polypeptide reads, in one-letter code: Phosphoglycerate kinase (397 aa).

Substrate-binding positions include 23 to 25, Arg-38, 61 to 64, Arg-119, and Arg-152; these read DLN and HLGR. ATP-binding positions include Lys-202, Glu-324, and 354–357; that span reads GGDT.

This sequence belongs to the phosphoglycerate kinase family. As to quaternary structure, monomer.

The protein resides in the cytoplasm. The catalysed reaction is (2R)-3-phosphoglycerate + ATP = (2R)-3-phospho-glyceroyl phosphate + ADP. It functions in the pathway carbohydrate degradation; glycolysis; pyruvate from D-glyceraldehyde 3-phosphate: step 2/5. This is Phosphoglycerate kinase (pgk) from Xanthobacter flavus.